Reading from the N-terminus, the 379-residue chain is Alanine racemase (379 aa).

The active-site Proton acceptor; specific for D-alanine is the Lys-35. Lys-35 carries the post-translational modification N6-(pyridoxal phosphate)lysine. Arg-133 lines the substrate pocket. Tyr-265 acts as the Proton acceptor; specific for L-alanine in catalysis. Met-312 contacts substrate.

The protein belongs to the alanine racemase family. The cofactor is pyridoxal 5'-phosphate.

The catalysed reaction is L-alanine = D-alanine. It functions in the pathway amino-acid biosynthesis; D-alanine biosynthesis; D-alanine from L-alanine: step 1/1. Its function is as follows. Catalyzes the interconversion of L-alanine and D-alanine. May also act on other amino acids. This chain is Alanine racemase (alr), found in Treponema denticola (strain ATCC 35405 / DSM 14222 / CIP 103919 / JCM 8153 / KCTC 15104).